The sequence spans 305 residues: Dermonecrotic toxin LiSicTox-betaID1 (305 aa).

An N-terminal signal peptide occupies residues 1 to 18; that stretch reads MQLFIILCLAGSAVQLEG. A propeptide spanning residues 19–26 is cleaved from the precursor; it reads TELDGVER. The active site involves His38. Positions 58 and 60 each coordinate Mg(2+). His74 functions as the Nucleophile in the catalytic mechanism. Intrachain disulfides connect Cys78/Cys84 and Cys80/Cys223. Asp118 serves as a coordination point for Mg(2+).

It belongs to the arthropod phospholipase D family. Class II subfamily. Class IIb sub-subfamily. Requires Mg(2+) as cofactor. In terms of tissue distribution, expressed by the venom gland.

It localises to the secreted. The catalysed reaction is an N-(acyl)-sphingosylphosphocholine = an N-(acyl)-sphingosyl-1,3-cyclic phosphate + choline. The enzyme catalyses an N-(acyl)-sphingosylphosphoethanolamine = an N-(acyl)-sphingosyl-1,3-cyclic phosphate + ethanolamine. It carries out the reaction a 1-acyl-sn-glycero-3-phosphocholine = a 1-acyl-sn-glycero-2,3-cyclic phosphate + choline. It catalyses the reaction a 1-acyl-sn-glycero-3-phosphoethanolamine = a 1-acyl-sn-glycero-2,3-cyclic phosphate + ethanolamine. Its function is as follows. Dermonecrotic toxins cleave the phosphodiester linkage between the phosphate and headgroup of certain phospholipids (sphingolipid and lysolipid substrates), forming an alcohol (often choline) and a cyclic phosphate. This toxin acts on sphingomyelin (SM) with low activity. It may also act on ceramide phosphoethanolamine (CPE), lysophosphatidylcholine (LPC) and lysophosphatidylethanolamine (LPE), but not on lysophosphatidylserine (LPS), and lysophosphatidylglycerol (LPG). It acts by transphosphatidylation, releasing exclusively cyclic phosphate products as second products. Has no or weak activities in inducing dermonecrosis, hemolysis, inflammatory response, platelet aggregation and increase in vessel permeability. In vivo, shows no lethality when injected at higher dose into mice. The sequence is that of Dermonecrotic toxin LiSicTox-betaID1 from Loxosceles intermedia (Brown spider).